A 377-amino-acid chain; its full sequence is Beta-lactamase (377 aa).

An N-terminal signal peptide occupies residues 1 to 19 (MFKTTLCALLITASCSTFA). The active-site Acyl-ester intermediate is the serine 80. Residues serine 80, glutamine 136, tyrosine 166, asparagine 168, alanine 334, and asparagine 359 each contribute to the a beta-lactam site.

This sequence belongs to the class-C beta-lactamase family. As to quaternary structure, monomer.

It localises to the periplasm. It carries out the reaction a beta-lactam + H2O = a substituted beta-amino acid. Inhibited by the beta-lactamase-blocking agents avibactam, enmetazobactam, relebactam, nacubactam, vaborbactam, taniborbactam, zidebactam, and beta-lactam-analog boronic acids, via a covalent binding to Ser-80. Inhibited by non-beta-lactam, benzo(b)thiophene-2-boronic acid (BZBTH2B) and various cyclic boronates. Not inhibited by clavulanic acid. Inhibited by O-aryloxycarbonyl hydroxamates, via cross-linking of the active site Ser-80 to Lys-331. Weakly inhibited by citric acid. Functionally, class C beta-lactamase which confers resistance to penicillins and cephalosporins. Has benzylpenicillin- and cephaloridine-hydrolyzing activity. Has weak cefuroxime, cefotaxime, cefoxitin and oxacillin-hydrolyzing activities. In Escherichia coli (strain K12), this protein is Beta-lactamase.